Reading from the N-terminus, the 125-residue chain is Glycine cleavage system H protein (125 aa).

The Lipoyl-binding domain occupies 19–101 (IATIGITDYA…MGDGWFIKLR (83 aa)). Lys60 is modified (N6-lipoyllysine).

The protein belongs to the GcvH family. As to quaternary structure, the glycine cleavage system is composed of four proteins: P, T, L and H. It depends on (R)-lipoate as a cofactor.

The glycine cleavage system catalyzes the degradation of glycine. The H protein shuttles the methylamine group of glycine from the P protein to the T protein. This is Glycine cleavage system H protein from Parvibaculum lavamentivorans (strain DS-1 / DSM 13023 / NCIMB 13966).